Reading from the N-terminus, the 127-residue chain is Fluoride-specific ion channel FluC (127 aa).

4 consecutive transmembrane segments (helical) span residues 4–24, 34–54, 65–85, and 97–117; these read IIYIFIGGGMGSVTRYLTQIA, FPFPWGTFAVNIIGSLLIGFF, FELRLFLTVGFCGGFTTFSTL, and FYGIFTFYVFISILLGLLAVL. The Na(+) site is built by Gly77 and Thr80.

The protein belongs to the fluoride channel Fluc/FEX (TC 1.A.43) family.

The protein resides in the cell inner membrane. The catalysed reaction is fluoride(in) = fluoride(out). Na(+) is not transported, but it plays an essential structural role and its presence is essential for fluoride channel function. Functionally, fluoride-specific ion channel. Important for reducing fluoride concentration in the cell, thus reducing its toxicity. The protein is Fluoride-specific ion channel FluC of Bacteroides fragilis (strain ATCC 25285 / DSM 2151 / CCUG 4856 / JCM 11019 / LMG 10263 / NCTC 9343 / Onslow / VPI 2553 / EN-2).